A 227-amino-acid chain; its full sequence is Cytochrome c oxidase subunit 2 (227 aa).

Topologically, residues 1–26 (MATWSNLSIQDGASPLMEQLSFFHDD) are mitochondrial intermembrane. The helical transmembrane segment at 27 to 48 (HTMVVLLITVIVGYALSYMLFN) threads the bilayer. Over 49–62 (AYTNRNMLHGHLIE) the chain is Mitochondrial matrix. The chain crosses the membrane as a helical span at residues 63–82 (TIWTALPAITLIFIALPSLR). Residues 83–227 (LLYLLDDSVD…LFIKWLSKMI (145 aa)) are Mitochondrial intermembrane-facing. 6 residues coordinate Cu cation: His-161, Cys-196, Glu-198, Cys-200, His-204, and Met-207. Glu-198 serves as a coordination point for Mg(2+).

Belongs to the cytochrome c oxidase subunit 2 family. As to quaternary structure, component of the cytochrome c oxidase (complex IV, CIV), a multisubunit enzyme composed of a catalytic core of 3 subunits and several supernumerary subunits. The complex exists as a monomer or a dimer and forms supercomplexes (SCs) in the inner mitochondrial membrane with ubiquinol-cytochrome c oxidoreductase (cytochrome b-c1 complex, complex III, CIII). The cofactor is Cu cation.

It is found in the mitochondrion inner membrane. The catalysed reaction is 4 Fe(II)-[cytochrome c] + O2 + 8 H(+)(in) = 4 Fe(III)-[cytochrome c] + 2 H2O + 4 H(+)(out). In terms of biological role, component of the cytochrome c oxidase, the last enzyme in the mitochondrial electron transport chain which drives oxidative phosphorylation. The respiratory chain contains 3 multisubunit complexes succinate dehydrogenase (complex II, CII), ubiquinol-cytochrome c oxidoreductase (cytochrome b-c1 complex, complex III, CIII) and cytochrome c oxidase (complex IV, CIV), that cooperate to transfer electrons derived from NADH and succinate to molecular oxygen, creating an electrochemical gradient over the inner membrane that drives transmembrane transport and the ATP synthase. Cytochrome c oxidase is the component of the respiratory chain that catalyzes the reduction of oxygen to water. Electrons originating from reduced cytochrome c in the intermembrane space (IMS) are transferred via the dinuclear copper A center (CU(A)) of subunit 2 and heme A of subunit 1 to the active site in subunit 1, a binuclear center (BNC) formed by heme A3 and copper B (CU(B)). The BNC reduces molecular oxygen to 2 water molecules using 4 electrons from cytochrome c in the IMS and 4 protons from the mitochondrial matrix. In Schistocerca gregaria (Desert locust), this protein is Cytochrome c oxidase subunit 2 (COII).